A 426-amino-acid polypeptide reads, in one-letter code: Serine--tRNA ligase (426 aa).

Residues 1–15 (MIDVKDLSENPDKFR) show a composition bias toward basic and acidic residues. Positions 1–22 (MIDVKDLSENPDKFRASQRARG) are disordered. 228 to 230 (TSE) contacts L-serine. Residues 259-261 (RRE) and Val275 each bind ATP. Glu282 lines the L-serine pocket. 346 to 349 (ELTS) lines the ATP pocket. Thr386 serves as a coordination point for L-serine.

Belongs to the class-II aminoacyl-tRNA synthetase family. Type-1 seryl-tRNA synthetase subfamily. As to quaternary structure, homodimer. The tRNA molecule binds across the dimer.

The protein localises to the cytoplasm. The enzyme catalyses tRNA(Ser) + L-serine + ATP = L-seryl-tRNA(Ser) + AMP + diphosphate + H(+). The catalysed reaction is tRNA(Sec) + L-serine + ATP = L-seryl-tRNA(Sec) + AMP + diphosphate + H(+). It functions in the pathway aminoacyl-tRNA biosynthesis; selenocysteinyl-tRNA(Sec) biosynthesis; L-seryl-tRNA(Sec) from L-serine and tRNA(Sec): step 1/1. Its function is as follows. Catalyzes the attachment of serine to tRNA(Ser). Is also able to aminoacylate tRNA(Sec) with serine, to form the misacylated tRNA L-seryl-tRNA(Sec), which will be further converted into selenocysteinyl-tRNA(Sec). This Pseudarthrobacter chlorophenolicus (strain ATCC 700700 / DSM 12829 / CIP 107037 / JCM 12360 / KCTC 9906 / NCIMB 13794 / A6) (Arthrobacter chlorophenolicus) protein is Serine--tRNA ligase.